Consider the following 499-residue polypeptide: Glutathione reductase, cytosolic (499 aa).

Positions 35, 36, 55, 72, 73, and 81 each coordinate FAD. Serine 35 serves as a coordination point for glutathione. The cysteines at positions 73 and 78 are disulfide-linked. Residue tyrosine 130 coordinates glutathione. Residue glycine 146 participates in FAD binding. Positions 211, 214, 217, 234, 240, and 297 each coordinate NADP(+). FAD-binding residues include aspartate 338 and threonine 346. NADP(+) is bound at residue alanine 376. Histidine 472 provides a ligand contact to FAD. Histidine 472 functions as the Proton acceptor in the catalytic mechanism.

The protein belongs to the class-I pyridine nucleotide-disulfide oxidoreductase family. As to quaternary structure, homodimer. FAD serves as cofactor.

Its subcellular location is the cytoplasm. The catalysed reaction is 2 glutathione + NADP(+) = glutathione disulfide + NADPH + H(+). Functionally, catalyzes the reduction of glutathione disulfide (GSSG) to reduced glutathione (GSH). Constitutes the major mechanism to maintain a high GSH:GSSG ratio in the cytosol. The sequence is that of Glutathione reductase, cytosolic from Arabidopsis thaliana (Mouse-ear cress).